We begin with the raw amino-acid sequence, 292 residues long: Acetylglutamate kinase (292 aa).

Residues 64-65, arginine 86, and asparagine 190 contribute to the substrate site; that span reads GG.

Belongs to the acetylglutamate kinase family. ArgB subfamily.

It localises to the cytoplasm. The enzyme catalyses N-acetyl-L-glutamate + ATP = N-acetyl-L-glutamyl 5-phosphate + ADP. It participates in amino-acid biosynthesis; L-arginine biosynthesis; N(2)-acetyl-L-ornithine from L-glutamate: step 2/4. In terms of biological role, catalyzes the ATP-dependent phosphorylation of N-acetyl-L-glutamate. In Geobacter sp. (strain M21), this protein is Acetylglutamate kinase.